We begin with the raw amino-acid sequence, 409 residues long: Putative actin-fragmin kinase DDB_G0268812 (409 aa).

A disordered region spans residues 1 to 45; the sequence is MKTFRDFKKKIKNNNNNKNNKNNNINNNNSNNNKNNKNNNNNNSN. Positions 5–46 form a coiled coil; it reads RDFKKKIKNNNNNKNNKNNNINNNNSNNNKNNKNNNNNNSNN. A compositionally biased stretch (low complexity) spans 13 to 45; sequence NNNNNKNNKNNNINNNNSNNNKNNKNNNNNNSN.

The protein belongs to the protein kinase superfamily. AFK Ser/Thr protein kinase family.

This is Putative actin-fragmin kinase DDB_G0268812 from Dictyostelium discoideum (Social amoeba).